The primary structure comprises 142 residues: Large ribosomal subunit protein uL13 (142 aa).

The protein belongs to the universal ribosomal protein uL13 family. As to quaternary structure, part of the 50S ribosomal subunit.

This protein is one of the early assembly proteins of the 50S ribosomal subunit, although it is not seen to bind rRNA by itself. It is important during the early stages of 50S assembly. The protein is Large ribosomal subunit protein uL13 of Marinomonas sp. (strain MWYL1).